Reading from the N-terminus, the 424-residue chain is UPF0229 protein ECA2349 (424 aa).

The disordered stretch occupies residues 53 to 111; sequence SIPNADINEPMFHQGRGGHRHRVHPGNDHFVQNDKIERPQGGGGSGSGQGDASKDGEGD. Basic and acidic residues predominate over residues 77–90; the sequence is PGNDHFVQNDKIER. Over residues 92–101 the composition is skewed to gly residues; that stretch reads QGGGGSGSGQ.

This sequence belongs to the UPF0229 family.

The sequence is that of UPF0229 protein ECA2349 from Pectobacterium atrosepticum (strain SCRI 1043 / ATCC BAA-672) (Erwinia carotovora subsp. atroseptica).